The following is a 173-amino-acid chain: Photosystem I assembly protein Ycf3 (173 aa).

TPR repeat units lie at residues 36–69 (AFAY…EQGE), 73–106 (SYIL…NPRL), and 121–154 (GELS…APNN).

The protein belongs to the Ycf3 family.

Its subcellular location is the cellular thylakoid membrane. Essential for the assembly of the photosystem I (PSI) complex. May act as a chaperone-like factor to guide the assembly of the PSI subunits. The sequence is that of Photosystem I assembly protein Ycf3 from Synechococcus sp. (strain JA-2-3B'a(2-13)) (Cyanobacteria bacterium Yellowstone B-Prime).